The chain runs to 224 residues: UPF0758 protein Bpro_0948 (224 aa).

An MPN domain is found at 102 to 224; that stretch reads LFSTPQAVRD…AVSMAELGLL (123 aa). Zn(2+) is bound by residues histidine 173, histidine 175, and aspartate 186. Positions 173–186 match the JAMM motif motif; that stretch reads HNHPSGAATPSRAD.

This sequence belongs to the UPF0758 family.

In Polaromonas sp. (strain JS666 / ATCC BAA-500), this protein is UPF0758 protein Bpro_0948.